Consider the following 156-residue polypeptide: Protein SprT (156 aa).

The SprT-like domain maps to 15–153 (NRYFNKHFTP…CKKCKEILVL (139 aa)). His67 contributes to the Zn(2+) binding site. Residue Glu68 is part of the active site. His71 provides a ligand contact to Zn(2+).

Belongs to the SprT family. It depends on Zn(2+) as a cofactor.

Its subcellular location is the cytoplasm. The chain is Protein SprT from Glaesserella parasuis serovar 5 (strain SH0165) (Haemophilus parasuis).